The sequence spans 94 residues: Sulfocarbamoylase-1 (94 aa).

Homodimer. Ubiquitous (at protein level). Highest levels of expression in crystalline style followed by digestive gland and mantle.

With respect to regulation, strongly inhibited by the serine proteinase inhibitor AEBSF. Weakly inhibited by the proteinase inhibitors BSF and aprotinin, and by EDTA. Not inhibited by the proteinase inhibitors bestatin, E-64 and leupeptin. Its function is as follows. Hydrolysis of sulfocarbamoyl esters of paralytic shellfish toxins. Does not hydrolyze the carbamoyl esters of paralytic shellfish toxins. Ester hydrolysis is significantly affected by the stereochemistry of sulfate esters at C-11 of the substrate toxin. The chain is Sulfocarbamoylase-1 from Megangulus venulosus (Japanese bivalve).